The sequence spans 338 residues: Ketol-acid reductoisomerase (NADP(+)) (338 aa).

Residues 2–182 form the KARI N-terminal Rossmann domain; sequence TKMYYEEDTD…GGARAGVLET (181 aa). NADP(+) is bound by residues 25 to 28, S51, S53, and 83 to 86; these read YGSQ and DELQ. Residue H108 is part of the active site. G134 serves as a coordination point for NADP(+). The KARI C-terminal knotted domain occupies 183-330; that stretch reads TFRTETETDL…SEIRKLYCWN (148 aa). 4 residues coordinate Mg(2+): D191, E195, E227, and E231. Residue S252 participates in substrate binding.

Belongs to the ketol-acid reductoisomerase family. Requires Mg(2+) as cofactor.

It carries out the reaction (2R)-2,3-dihydroxy-3-methylbutanoate + NADP(+) = (2S)-2-acetolactate + NADPH + H(+). The catalysed reaction is (2R,3R)-2,3-dihydroxy-3-methylpentanoate + NADP(+) = (S)-2-ethyl-2-hydroxy-3-oxobutanoate + NADPH + H(+). Its pathway is amino-acid biosynthesis; L-isoleucine biosynthesis; L-isoleucine from 2-oxobutanoate: step 2/4. The protein operates within amino-acid biosynthesis; L-valine biosynthesis; L-valine from pyruvate: step 2/4. Its function is as follows. Involved in the biosynthesis of branched-chain amino acids (BCAA). Catalyzes an alkyl-migration followed by a ketol-acid reduction of (S)-2-acetolactate (S2AL) to yield (R)-2,3-dihydroxy-isovalerate. In the isomerase reaction, S2AL is rearranged via a Mg-dependent methyl migration to produce 3-hydroxy-3-methyl-2-ketobutyrate (HMKB). In the reductase reaction, this 2-ketoacid undergoes a metal-dependent reduction by NADPH to yield (R)-2,3-dihydroxy-isovalerate. This is Ketol-acid reductoisomerase (NADP(+)) from Clostridium botulinum (strain Eklund 17B / Type B).